The chain runs to 328 residues: Malate dehydrogenase (328 aa).

16-22 (GAAGQIS) is a binding site for NAD(+). Substrate-binding residues include arginine 97 and arginine 103. NAD(+)-binding positions include asparagine 110, glutamine 117, and 134–136 (VGN). Residues asparagine 136 and arginine 167 each contribute to the substrate site. Histidine 192 serves as the catalytic Proton acceptor.

Belongs to the LDH/MDH superfamily. MDH type 2 family. As to quaternary structure, homotetramer.

It catalyses the reaction (S)-malate + NAD(+) = oxaloacetate + NADH + H(+). Citrate activates the enzyme in the oxidation of malate to oxaloacetate and inhibits it in the reverse reaction. Its function is as follows. Catalyzes the reversible oxidation of malate to oxaloacetate. Exhibits higher catalytic efficiency for oxaloacetate reduction than for malate oxidation in vitro. Almost equally active both for NADH and NADPH on the bases of the kcat values at pH 6.5, but catalytic efficiency for oxaloacetate reduction is 50-fold higher with NADH. This chain is Malate dehydrogenase, found in Corynebacterium glutamicum (strain ATCC 13032 / DSM 20300 / JCM 1318 / BCRC 11384 / CCUG 27702 / LMG 3730 / NBRC 12168 / NCIMB 10025 / NRRL B-2784 / 534).